Reading from the N-terminus, the 1006-residue chain is Beta-galactosidase (1006 aa).

Residues 1 to 19 (MKLSSACAIALLAAQAAGA) form the signal peptide. An N-linked (GlcNAc...) asparagine glycan is attached at Asn-156. Glu-200 (proton donor) is an active-site residue. The active-site Nucleophile is Glu-298. 10 N-linked (GlcNAc...) asparagine glycosylation sites follow: Asn-373, Asn-402, Asn-422, Asn-478, Asn-522, Asn-622, Asn-739, Asn-760, Asn-777, and Asn-805.

The protein belongs to the glycosyl hydrolase 35 family.

The enzyme catalyses Hydrolysis of terminal non-reducing beta-D-galactose residues in beta-D-galactosides.. In terms of biological role, cleaves beta-linked terminal galactosyl residues from gangliosides, glycoproteins, and glycosaminoglycans. The sequence is that of Beta-galactosidase (lacA) from Aspergillus niger.